The following is an 874-amino-acid chain: Lon protease (874 aa).

A Lon N-terminal domain is found at 18–261; the sequence is LPVLPLDDAV…RLLTWTKEHL (244 aa). 3 disordered regions span residues 47–68, 120–144, and 298–318; these read VDAA…GISS, GGVR…SGAG, and LSEL…EPAD. Residues 124 to 142 are compositionally biased toward low complexity; sequence PAPAGTDTTGTGTADATSG. An ATP-binding site is contributed by 430–437; it reads GPPGVGKT. In terms of domain architecture, Lon proteolytic spans 667–851; it reads TALPGVATGL…REVLDLALEP (185 aa). Residues Ser-757 and Lys-800 contribute to the active site. Positions 853–874 are disordered; the sequence is FDADHGGRSPGRAGHSPTALAA.

This sequence belongs to the peptidase S16 family. In terms of assembly, homohexamer. Organized in a ring with a central cavity.

It is found in the cytoplasm. The enzyme catalyses Hydrolysis of proteins in presence of ATP.. Its function is as follows. ATP-dependent serine protease that mediates the selective degradation of mutant and abnormal proteins as well as certain short-lived regulatory proteins. Required for cellular homeostasis and for survival from DNA damage and developmental changes induced by stress. Degrades polypeptides processively to yield small peptide fragments that are 5 to 10 amino acids long. Binds to DNA in a double-stranded, site-specific manner. The protein is Lon protease of Frankia alni (strain DSM 45986 / CECT 9034 / ACN14a).